The sequence spans 150 residues: 3-dehydroquinate dehydratase (150 aa).

Tyr-22 (proton acceptor) is an active-site residue. Substrate contacts are provided by Asn-73, His-79, and Asp-86. The Proton donor role is filled by His-99. Substrate is bound by residues 100–101 (LT) and Arg-110.

This sequence belongs to the type-II 3-dehydroquinase family. In terms of assembly, homododecamer.

It catalyses the reaction 3-dehydroquinate = 3-dehydroshikimate + H2O. The protein operates within metabolic intermediate biosynthesis; chorismate biosynthesis; chorismate from D-erythrose 4-phosphate and phosphoenolpyruvate: step 3/7. Its function is as follows. Catalyzes a trans-dehydration via an enolate intermediate. The polypeptide is 3-dehydroquinate dehydratase (Desulforudis audaxviator (strain MP104C)).